A 410-amino-acid chain; its full sequence is Regulator of microtubule dynamics protein 2 (410 aa).

The helical transmembrane segment at 10 to 27 (IFGIMVGTAGISLLLLWY) threads the bilayer. Ser51 carries the phosphoserine modification. Residues 68-110 (FQERQLQILEKLNELLTNMEELKEEIRFLKETVPKLEEYIQDE) are a coiled coil. Position 121 is a phosphoserine (Ser121). The span at 122-131 (PQHRARKRRL) shows a compositional bias: basic residues. The disordered stretch occupies residues 122 to 151 (PQHRARKRRLPTIQSSATSNSSEEAESEGG). Thr139 is modified (phosphothreonine). Residue Tyr152 is modified to Phosphotyrosine. Residues Thr154 and Thr157 each carry the phosphothreonine modification.

This sequence belongs to the RMDN family. In terms of assembly, interacts with microtubules.

The protein localises to the membrane. Its subcellular location is the cytoplasm. It is found in the cytoskeleton. It localises to the spindle. The protein resides in the spindle pole. The protein is Regulator of microtubule dynamics protein 2 (RMDN2) of Macaca fascicularis (Crab-eating macaque).